The sequence spans 186 residues: Ribosome-recycling factor (186 aa).

This sequence belongs to the RRF family.

It is found in the cytoplasm. In terms of biological role, responsible for the release of ribosomes from messenger RNA at the termination of protein biosynthesis. May increase the efficiency of translation by recycling ribosomes from one round of translation to another. The polypeptide is Ribosome-recycling factor (Pelodictyon phaeoclathratiforme (strain DSM 5477 / BU-1)).